Consider the following 49-residue polypeptide: Large ribosomal subunit protein bL33A (49 aa).

It belongs to the bacterial ribosomal protein bL33 family.

This is Large ribosomal subunit protein bL33A from Mycoplasmopsis agalactiae (strain NCTC 10123 / CIP 59.7 / PG2) (Mycoplasma agalactiae).